Reading from the N-terminus, the 108-residue chain is PTS system galactose-specific EIIB component (108 aa).

The PTS EIIB type-3 domain maps to 3-108; it reads DKVIALACAA…VLAAAENLMN (106 aa). The active-site Phosphocysteine intermediate is the cysteine 10. A Phosphocysteine; by EIIA modification is found at cysteine 10.

It carries out the reaction N(pros)-phospho-L-histidyl-[protein] + D-galactose(out) = D-galactose 6-phosphate(in) + L-histidyl-[protein]. In terms of biological role, the phosphoenolpyruvate-dependent sugar phosphotransferase system (sugar PTS), a major carbohydrate active transport system, catalyzes the phosphorylation of incoming sugar substrates concomitantly with their translocation across the cell membrane. Involved in galactose transport with PtcA and Lmg_0963. This is PTS system galactose-specific EIIB component from Lactococcus lactis subsp. cremoris (strain MG1363).